We begin with the raw amino-acid sequence, 515 residues long: 1-pyrroline-5-carboxylate dehydrogenase 2 (515 aa).

Active-site residues include glutamate 286 and cysteine 320.

This sequence belongs to the aldehyde dehydrogenase family. RocA subfamily.

It carries out the reaction L-glutamate 5-semialdehyde + NAD(+) + H2O = L-glutamate + NADH + 2 H(+). The protein operates within amino-acid degradation; L-proline degradation into L-glutamate; L-glutamate from L-proline: step 2/2. Its function is as follows. Important for the use of proline as a sole carbon and energy source or a sole nitrogen source. This is 1-pyrroline-5-carboxylate dehydrogenase 2 from Bacillus subtilis (strain 168).